The sequence spans 192 residues: Peptidyl-tRNA hydrolase (192 aa).

Tyrosine 14 contacts tRNA. Histidine 19 (proton acceptor) is an active-site residue. 3 residues coordinate tRNA: tyrosine 64, asparagine 66, and asparagine 112.

It belongs to the PTH family. As to quaternary structure, monomer.

The protein resides in the cytoplasm. The enzyme catalyses an N-acyl-L-alpha-aminoacyl-tRNA + H2O = an N-acyl-L-amino acid + a tRNA + H(+). Hydrolyzes ribosome-free peptidyl-tRNAs (with 1 or more amino acids incorporated), which drop off the ribosome during protein synthesis, or as a result of ribosome stalling. Functionally, catalyzes the release of premature peptidyl moieties from peptidyl-tRNA molecules trapped in stalled 50S ribosomal subunits, and thus maintains levels of free tRNAs and 50S ribosomes. The chain is Peptidyl-tRNA hydrolase from Anaeromyxobacter dehalogenans (strain 2CP-1 / ATCC BAA-258).